The sequence spans 278 residues: Lectin 6 (278 aa).

The first 23 residues, 1-23 (MTLSSALIKIFITFLFLQNHVNS), serve as a signal peptide directing secretion. N-linked (GlcNAc...) asparagine glycosylation is found at Asn116, Asn139, and Asn271.

Belongs to the leguminous lectin family.

In terms of biological role, may be involved in arbuscular mycorrhizal (AM) symbiosis with AM fungi. The chain is Lectin 6 from Medicago truncatula (Barrel medic).